The sequence spans 149 residues: MESTFIMIKPDGVQRGLIGEIISRFEKKGFYLKALKLVNVERSFAEKHYADLSSKPFFQGLVDYIISGPVVAMVWEGKSVVTTGRKIIGATNPLVSEPGTIRGDFAVDIGRNVIHGSDSIESANKEIALWFPEGLADWQSSQHPWIYEK.

6 residues coordinate ATP: lysine 9, phenylalanine 57, arginine 85, threonine 91, arginine 102, and asparagine 112. Histidine 115 (pros-phosphohistidine intermediate) is an active-site residue.

Belongs to the NDK family. Requires Mg(2+) as cofactor. Autophosphorylated.

The enzyme catalyses a 2'-deoxyribonucleoside 5'-diphosphate + ATP = a 2'-deoxyribonucleoside 5'-triphosphate + ADP. It carries out the reaction a ribonucleoside 5'-diphosphate + ATP = a ribonucleoside 5'-triphosphate + ADP. In terms of biological role, major role in the synthesis of nucleoside triphosphates other than ATP. The ATP gamma phosphate is transferred to the NDP beta phosphate via a ping-pong mechanism, using a phosphorylated active-site intermediate. Also exhibits a kinase-like activity towards histone H1. This Saccharum officinarum (Sugarcane) protein is Nucleoside diphosphate kinase 1 (NDPK1).